A 281-amino-acid polypeptide reads, in one-letter code: Probable splicing factor, arginine/serine-rich 2 (281 aa).

An RRM 1 domain is found at 2 to 72 (VRVYIGRLPN…ERVILEFPRR (71 aa)). 2 stretches are compositionally biased toward basic and acidic residues: residues 78-97 (EERS…KGGE) and 168-190 (KLQG…DRSR). Disordered stretches follow at residues 78 to 100 (EERS…ERQF) and 168 to 281 (KLQG…SASP). One can recognise an RRM 2 domain in the interval 112–186 (FRLVIDNLST…RKLKCTDETR (75 aa)). Basic residues predominate over residues 191–215 (SRSPRRRSRSRSPTRSRSPPARRRS). A compositionally biased stretch (basic and acidic residues) spans 216 to 225 (PGSDRSDRKS). The span at 245 to 254 (RSRSGGRRSR) shows a compositional bias: basic residues.

This sequence belongs to the splicing factor SR family. Post-translationally, extensively phosphorylated on serine residues in the RS domain.

The protein localises to the nucleus. In terms of biological role, plays a functionally redundant role in spermatogenesis and growth rate control. Required for the development of somatic gonad structures and for progression from larval stage to adulthood. In Caenorhabditis elegans, this protein is Probable splicing factor, arginine/serine-rich 2 (rsp-2).